A 748-amino-acid polypeptide reads, in one-letter code: Elongation factor G, mitochondrial (748 aa).

The N-terminal 14 residues, 1–14 (MTISSFLRVRHSLA), are a transit peptide targeting the mitochondrion. Residues 40–318 (ERIRNIGISA…VLNYLPHPGE (279 aa)) form the tr-type G domain. GTP-binding positions include 49–56 (AHIDSGKT), 116–120 (DTPGH), and 170–173 (NKLD).

The protein belongs to the TRAFAC class translation factor GTPase superfamily. Classic translation factor GTPase family. EF-G/EF-2 subfamily.

Its subcellular location is the mitochondrion. It participates in protein biosynthesis; polypeptide chain elongation. Mitochondrial GTPase that catalyzes the GTP-dependent ribosomal translocation step during translation elongation. During this step, the ribosome changes from the pre-translocational (PRE) to the post-translocational (POST) state as the newly formed A-site-bound peptidyl-tRNA and P-site-bound deacylated tRNA move to the P and E sites, respectively. Catalyzes the coordinated movement of the two tRNA molecules, the mRNA and conformational changes in the ribosome. This chain is Elongation factor G, mitochondrial, found in Aedes aegypti (Yellowfever mosquito).